The primary structure comprises 1309 residues: MSSTCSSPSAVEDPELGFRIDLDWTAGDSEDQVALRLESQLMVALPAPHDTVVVELKGIGDDDEGGLENVGLEMRVEKRREPLRAVTLMKAVGSGQQYDGVGVLTRLMRSDMMPAAIPAPAIDVASSCGVHWKTVTSLSLSGCGLLVMPVEVTELPLLEKLCLEHNKLSVLPPEIGKLKNLKILRVDNNMLISVPVELRQCVGLVELSLEHNKLVRPLLDFRAMAGLRILRLFGNPLEFLPEILPLHQLRHLSLVNIRIVSDENLRSVNVQIETENTSYFGASRHKLSAFSPLIFRSSSCHHPLLASTLVKIMQDEGNRSVIGKDENAVRQLISMITSDNQHVVEQACVALSSLARDVGVAMQLMKCDIMKPTETVLKSSSPDEVISVLQVVVTLAFVSDSVSQKMLTKDMLKALKSLCAHKNPEVQRQALLAVGNLAFCLENRRILITSESLRELLMRLIVTPEPRVNKAAARALAILGENEILRRSIKGRQVPKQGLRILTMDGGGMKGLATVQILKEIEKGSGKPIHELFDLICGTSTGGMLAIALGVKLMTLEQCEEIYKNLGKLVFAESVPKDNEAASWREKLDQLYKSSSQSFRVVIHGSKHSANEFERLLKEMCADEDGDLLIESAVKNVPKVFVVSTLVSVMPAQPFIFRNYQYPVGTPEMSYAFSDHSGGSTLTSSTASDQAGYYKQSAFMGSCKHQVWQAIRASSAAPYYLDDFSVDSYRWQDGAIVANNPTIFAIREAQLLWPDTKIDCLVSIGSGSVPTRVRKGGWRYLDTGQVLIESACSVERVEEALSTLLPMLPEIQYFRFNPVDDRCGMELDETDPAIWLKLEAAIEEFIQSNPQVFKNVCERLTLPFLNDEKWCDNLKPRFMNGKLPNSRVESSPSLGWRRNVLLMEAQHSPDSGRVKYHARALESFCSNNGIKLSSLHTTATPGCQKPSPGTAFPTPFTSPLITGSLPPSPLLFTPELGPQKFNRIDMVPPLSLDGGHVGKTVMSPPSSPPRQRQLYLPLRQMHEKLQNLPQVGILHLSLQNDSNGSILSWQNDVFVVAEPGDLADKFLQSVKVSILSVMQSNRRKAASVLSNICSISDLVRSKKCFQVGNIIHRYIGRQTLVMEDDQEIASFMFRRTVPSAHLTPDDIRWMVGAWRDRIIVFSGTFGPTQAVVKAFLDSGAKAVIGPSNEPQETPLITSQGSSEYNIGDQNGKFEIGEEEDEDEEVNEETEREEMEPPTPTSDWEDSDHEKTNRDGKYCGLWEDDEEEVSEFVCQLYDQLFRENSRVDVALQKALASHRKLRYTCHLPNV.

4 LRR repeats span residues 155 to 178 (LPLL…IGKL), 180 to 201 (NLKI…LRQC), 203 to 223 (GLVE…DFRA), and 224 to 248 (MAGL…PLHQ). 3 ARM repeats span residues 315–356 (DEGN…SLAR), 401–439 (SVSQ…NLAF), and 440–481 (CLEN…ILGE). The PNPLA domain maps to 502 to 746 (LTMDGGGMKG…VANNPTIFAI (245 aa)). The short motif at 506–511 (GGGMKG) is the GXGXXG element. The GXSXG signature appears at 538-542 (GTSTG). Ser540 serves as the catalytic Nucleophile. The active-site Proton acceptor is Asp733. Positions 733-735 (DGA) match the DGA/G motif. Residues 1183–1253 (VIGPSNEPQE…EDSDHEKTNR (71 aa)) are disordered. The span at 1188–1208 (NEPQETPLITSQGSSEYNIGD) shows a compositional bias: polar residues. The span at 1216–1235 (GEEEDEDEEVNEETEREEME) shows a compositional bias: acidic residues.

Belongs to the patatin family.

The protein resides in the plastid. Its subcellular location is the chloroplast. Functionally, possesses non-specific lipolytic acyl hydrolase (LAH) activity. Catalyzes the hydrolysis of the galactolipids monogalactosyldiacylglycerol (MGDG) and digalactosyldiacylglycerol (DGDG), and less efficiently the phoshpolipids phosphatidylcholine (PC), phosphatidylethanolamine (PE), phosphatidylglycerol (PG), phosphatidylserine (PS) and phosphatidylinositol (PI). Hydrolyzes phospholipids at both the sn-1 and sn-2 positions. Involved in basal jasmonic acid production and promotes resistance to the necrotrophic fungal pathogen Botrytis cinerea. The sequence is that of Phospholipase A I (PLA1) from Arabidopsis thaliana (Mouse-ear cress).